Consider the following 281-residue polypeptide: Leukocyte antigen CD37 (281 aa).

The Cytoplasmic portion of the chain corresponds to 1-17 (MSAQESCLSLIKYFLFV). A helical membrane pass occupies residues 18–38 (FNLFFFVLGGLIFCFGTWILI). Topologically, residues 39–59 (DKTSFVSFVGLSFVPLQTWSK) are extracellular. A helical transmembrane segment spans residues 60–74 (VLSVSGVLTMALALL). At 75–85 (GCVGALKELRC) the chain is on the cytoplasmic side. A helical membrane pass occupies residues 86-111 (LLGLYFGMLLLLFATQITLGILISTQ). The Extracellular portion of the chain corresponds to 112–241 (RVRLERRVQE…RSLQKWLHNN (130 aa)). 3 N-linked (GlcNAc...) asparagine glycosylation sites follow: Asn170, Asn183, and Asn188. Residues 242 to 266 (IISIVGICLGVGLLELGFMTLSIFL) form a helical membrane-spanning segment. Residues 267–281 (CRNLDHVYDRLARYR) lie on the Cytoplasmic side of the membrane.

The protein belongs to the tetraspanin (TM4SF) family. Interacts with SCIMP. Interacts with SOCS3. Interacts with DECTIN1/CLEC7A. Tyrosine phosphorylated; leading to activation of downstream signaling pathways. B-lymphocytes.

The protein localises to the cell membrane. Its function is as follows. Structural component of specialized membrane microdomains known as tetraspanin-enriched microdomains (TERMs), which act as platforms for receptor clustering and signaling. Participates thereby in diverse biological functions such as cell signal transduction, adhesion, migration and protein trafficking. Upon ligand binding, two signaling pathways are activated, one acting through phosphorylation by LYN leading to cell death or a survival pathway with activation of GSK3B. Plays an essential role essential for clustering of integrin ITGA4/ITGB1 and promotes its mobility in the plasma membrane of B-cells. In turn, participates in ITGA4/ITGB1 integrin-mediated antiapoptotic signaling through AKT. Plays also a role in the migration of dendritic cells and neutrophils to draining lymph nodes, as well as in their integrin-mediated adhesion. Negatively regulates IL-6 responses through direct interaction with SOCS3 thereby preventing constitutive IL-6 signaling. Alternatively, inhibition of IL-6 signaling can also occur via interaction and stabilization of DECTIN1/CLEC7A at the cell membrane to inhibit its ability to promote the production of IL-6. The sequence is that of Leukocyte antigen CD37 (Cd37) from Rattus norvegicus (Rat).